The primary structure comprises 148 residues: SsrA-binding protein (148 aa).

This sequence belongs to the SmpB family.

It localises to the cytoplasm. Required for rescue of stalled ribosomes mediated by trans-translation. Binds to transfer-messenger RNA (tmRNA), required for stable association of tmRNA with ribosomes. tmRNA and SmpB together mimic tRNA shape, replacing the anticodon stem-loop with SmpB. tmRNA is encoded by the ssrA gene; the 2 termini fold to resemble tRNA(Ala) and it encodes a 'tag peptide', a short internal open reading frame. During trans-translation Ala-aminoacylated tmRNA acts like a tRNA, entering the A-site of stalled ribosomes, displacing the stalled mRNA. The ribosome then switches to translate the ORF on the tmRNA; the nascent peptide is terminated with the 'tag peptide' encoded by the tmRNA and targeted for degradation. The ribosome is freed to recommence translation, which seems to be the essential function of trans-translation. This Ehrlichia canis (strain Jake) protein is SsrA-binding protein.